We begin with the raw amino-acid sequence, 562 residues long: AT-rich interactive domain-containing protein 1 (562 aa).

In terms of domain architecture, ARID spans 43 to 136; that stretch reads KELISLFRPL…YLDAFGRWLN (94 aa). Residues 358 to 448 enclose the ELM2 domain; the sequence is PCALVGSKFQ…KLELGPAFYM (91 aa).

Its subcellular location is the nucleus. The chain is AT-rich interactive domain-containing protein 1 (ARID1) from Arabidopsis thaliana (Mouse-ear cress).